Reading from the N-terminus, the 193-residue chain is 3-isopropylmalate dehydratase small subunit (193 aa).

It belongs to the LeuD family. LeuD type 1 subfamily. Heterodimer of LeuC and LeuD.

The catalysed reaction is (2R,3S)-3-isopropylmalate = (2S)-2-isopropylmalate. The protein operates within amino-acid biosynthesis; L-leucine biosynthesis; L-leucine from 3-methyl-2-oxobutanoate: step 2/4. Functionally, catalyzes the isomerization between 2-isopropylmalate and 3-isopropylmalate, via the formation of 2-isopropylmaleate. This Bacillus thuringiensis subsp. konkukian (strain 97-27) protein is 3-isopropylmalate dehydratase small subunit.